Here is a 523-residue protein sequence, read N- to C-terminus: Putative pentatricopeptide repeat-containing protein At3g15200 (523 aa).

PPR repeat units follow at residues 142-172, 177-211, 212-242, 246-280, 281-315, 316-350, 351-385, 388-418, 420-454, and 455-489; these read SSML…MSKR, NEKT…GIDD, DLVA…RRRE, DIKA…KCRP, DVVS…RRNP, DVKI…GPDP, NVVT…GGSC, NDVT…NKCE, TSDL…GLGP, and DQRT…GMVP. The disordered stretch occupies residues 497–523; that stretch reads LNQNKTKPRVEDKMLRSNLTSEESESD.

Belongs to the PPR family. P subfamily.

This Arabidopsis thaliana (Mouse-ear cress) protein is Putative pentatricopeptide repeat-containing protein At3g15200.